A 204-amino-acid chain; its full sequence is Calexcitin-1 (204 aa).

3 EF-hand domains span residues 25 to 61 (FLVK…VRDI), 75 to 110 (SLAA…TDAK), and 115 to 150 (WFKD…YGFD). Ca(2+)-binding residues include Asp39, Asn41, Ser43, Gln45, Asp50, Asp88, Asp90, Asp92, Glu99, Asp128, Ser130, Asp132, and Glu139.

The protein is Calexcitin-1 (cex-1) of Caenorhabditis elegans.